The sequence spans 34 residues: Photosystem II reaction center protein M (34 aa).

Residues 7 to 27 (GFVASLMFILVPAIFLIVLYI) form a helical membrane-spanning segment.

Belongs to the PsbM family. PSII is composed of 1 copy each of membrane proteins PsbA, PsbB, PsbC, PsbD, PsbE, PsbF, PsbH, PsbI, PsbJ, PsbK, PsbL, PsbM, PsbT, PsbX, PsbY, PsbZ, Psb30/Ycf12, peripheral proteins PsbO, CyanoQ (PsbQ), PsbU, PsbV and a large number of cofactors. It forms dimeric complexes.

It is found in the cellular thylakoid membrane. Functionally, one of the components of the core complex of photosystem II (PSII). PSII is a light-driven water:plastoquinone oxidoreductase that uses light energy to abstract electrons from H(2)O, generating O(2) and a proton gradient subsequently used for ATP formation. It consists of a core antenna complex that captures photons, and an electron transfer chain that converts photonic excitation into a charge separation. This subunit is found at the monomer-monomer interface. The sequence is that of Photosystem II reaction center protein M from Synechococcus sp. (strain CC9902).